The sequence spans 693 residues: Triadin (693 aa).

The Cytoplasmic segment spans residues 1–47; sequence MTEITAEGNASTTTTVIDNKNGCIPKSPGKVLKRSVTEDIVTTFSSP. The chain crosses the membrane as a helical span at residues 48-68; sequence AAWLLVIALIITWSAVAIVMF. Residues 69 to 693 are Lumenal-facing; the sequence is DLVDYKNFSA…NSPGQKQQEQ (625 aa). A compositionally biased stretch (acidic residues) spans 117-130; sequence EGDEDDEDADEDID. 3 disordered regions span residues 117-260, 278-649, and 666-693; these read EGDE…AVHE, GDLK…QTRP, and FQFP…QQEQ. Composition is skewed to basic and acidic residues over residues 131–241 and 249–260; these read KGEI…KETP and KKDDKEMPAVHE. Serine 301 carries the post-translational modification Phosphoserine. Basic and acidic residues predominate over residues 305–352; that stretch reads LEEKEKEEKKKMEKKDTSDTKKKEKEVKKKSEETTIDGKGKEPGKPPE. The span at 354-364 shows a compositional bias: polar residues; the sequence is KQMTAKLTTQA. 2 stretches are compositionally biased toward basic and acidic residues: residues 366–427 and 438–502; these read ARKD…KEEI and GKKE…KEAK. Asparagine 515 carries an N-linked (GlcNAc...) asparagine glycan. 2 stretches are compositionally biased toward basic and acidic residues: residues 526–547 and 558–579; these read VKPE…DKPK and DSGK…REEN. N-linked (GlcNAc...) asparagine glycosylation occurs at asparagine 584. Residues 587-637 are compositionally biased toward basic and acidic residues; that stretch reads KAEKPGKIPKDSKEAPASKKDKEDSKEAPTSKKDKEDSKDVPHSKKDKEVT. Residues 672–693 are compositionally biased toward polar residues; the sequence is PVQQPGENPGKTNSPGQKQQEQ.

Homooligomer of variable subunit number; disulfide-linked. Interacts with CASQ1 and RYR1 in skeletal muscle. Interacts with CASQ2. Post-translationally, phosphorylated by CaMK2. In terms of processing, N-glycosylated. In terms of tissue distribution, detected in heart (at protein level). Detected in heart.

The protein localises to the sarcoplasmic reticulum membrane. Contributes to the regulation of lumenal Ca2+ release via the sarcoplasmic reticulum calcium release channels RYR1 and RYR2, a key step in triggering skeletal and heart muscle contraction. Required for normal organization of the triad junction, where T-tubules and the sarcoplasmic reticulum terminal cisternae are in close contact. Required for normal skeletal muscle strength. Plays a role in excitation-contraction coupling in the heart and in regulating the rate of heart beats. This is Triadin from Mus musculus (Mouse).